The following is a 586-amino-acid chain: Aspartate--tRNA ligase (586 aa).

Residue glutamate 171 participates in L-aspartate binding. The interval 195–198 (QLFK) is aspartate. Arginine 217 serves as a coordination point for L-aspartate. Residues 217-219 (RDE) and glutamine 226 each bind ATP. L-aspartate is bound at residue histidine 448. Glutamate 482 serves as a coordination point for ATP. Position 489 (arginine 489) interacts with L-aspartate. 534-537 (GLDR) lines the ATP pocket.

This sequence belongs to the class-II aminoacyl-tRNA synthetase family. Type 1 subfamily. In terms of assembly, homodimer.

It is found in the cytoplasm. The catalysed reaction is tRNA(Asp) + L-aspartate + ATP = L-aspartyl-tRNA(Asp) + AMP + diphosphate. Its function is as follows. Catalyzes the attachment of L-aspartate to tRNA(Asp) in a two-step reaction: L-aspartate is first activated by ATP to form Asp-AMP and then transferred to the acceptor end of tRNA(Asp). In Buchnera aphidicola subsp. Acyrthosiphon pisum (strain 5A), this protein is Aspartate--tRNA ligase.